Here is an 875-residue protein sequence, read N- to C-terminus: Pyrogallol hydroxytransferase large subunit (875 aa).

A disordered region spans residues 82 to 104 (RKSFDPNGERNPQLRGAGLSKQD). Ser175 contributes to the Mo-bis(molybdopterin guanine dinucleotide) binding site.

It belongs to the prokaryotic molybdopterin-containing oxidoreductase family. In terms of assembly, heterodimer of a large and a small subunit. It depends on Mo-bis(molybdopterin guanine dinucleotide) as a cofactor.

The catalysed reaction is 1,2,3,5-tetrahydroxybenzene + 1,2,3-trihydroxybenzene = 1,2,3,5-tetrahydroxybenzene + 1,3,5-trihydroxybenzene. Isomerization of pyrogallol to phloroglucin. The protein is Pyrogallol hydroxytransferase large subunit (athL) of Pelobacter acidigallici.